We begin with the raw amino-acid sequence, 571 residues long: Acetolactate synthase large subunit (571 aa).

E51 is a binding site for thiamine diphosphate. FAD contacts are provided by residues R153, 261 to 282 (HGTYEANMTMHHADVIFAIGVR), and 304 to 323 (DIDPTSISKTVSANIPIVGD). The thiamine pyrophosphate binding stretch occupies residues 394-474 (QHQMFTALYY…VLILNLNNSS (81 aa)). Mg(2+) is bound by residues D445 and N472.

This sequence belongs to the TPP enzyme family. As to quaternary structure, dimer of large and small chains. The cofactor is Mg(2+). It depends on thiamine diphosphate as a cofactor.

It catalyses the reaction 2 pyruvate + H(+) = (2S)-2-acetolactate + CO2. It participates in amino-acid biosynthesis; L-isoleucine biosynthesis; L-isoleucine from 2-oxobutanoate: step 1/4. The protein operates within amino-acid biosynthesis; L-valine biosynthesis; L-valine from pyruvate: step 1/4. This Buchnera aphidicola subsp. Acyrthosiphon pisum (strain APS) (Acyrthosiphon pisum symbiotic bacterium) protein is Acetolactate synthase large subunit (ilvI).